A 725-amino-acid polypeptide reads, in one-letter code: MASWGGEKRGGAEGSPKLAVYATRKTRSVRSQEDQWYLGYPGDQWSSGFSYSWWKNSVGSESKHGEGALDQPQHDVRLEDLGELHRAARSGDVPGVEHVLAPGDTGVDKRDRKKSIQQLVPEYKEKQTPESLPQNNNPDWHPTNLTLSDETCQRSKNLKVGDKSPSVSPSMPENQSATKELGQMNLTEREKMDTGVVLLSGNDTLHDLCQSQLPENKESKEAEQDLELTSEEEQERLKGCENKQPQKTSQEPEMAKDCDREDIPIYPVLPHVQKSEEMWIEQGKLEWKNQLKLVINELKQRFGEIYEKYKIPACPEEEPLLDNSTRGTDVKDIPFNLTNNIPGCEEEDASEISVSVVFETFPEQKEPSLKNIIHPYYHPYSGSQEHVCQSSSKLHLHENKLDCDNDNKLGIGHIFSTDNNFHNDASTKKARNPEVVTVEMKEDQEFDLQMTKNMNQNSDSGSTNNYKSLKPKLENLSSLPPDSDRTSEVYLHEELQQDMQKFKNEVNTLEEEFLALKKENVQLHKEVEEEMEKHRSNSTELSGTLTDGTTVGNDDDGLNQQIPRKENEEHDRPADKTANEKNKVKNQIYPEADFADSMEPSEIASEDCELSHSVYENFMLLIEQLRMEYKDSASLPRIQDTFCLCEHLLKLKNNHCDQLTVKLKQMENMVSVLQNELSETKKTKLQLELQKIEWEKELYDLRLALKQENGRKEMPICCIIKIVNS.

Residues 1–11 show a composition bias toward basic and acidic residues; it reads MASWGGEKRGG. Disordered regions lie at residues 1–25, 87–188, 213–260, 453–485, and 528–586; these read MASWGGEKRGGAEGSPKLAVYATRK, AARS…NLTE, LPEN…DCDR, NMNQNSDSGSTNNYKSLKPKLENLSSLPPDSDR, and EEEM…KVKN. Composition is skewed to polar residues over residues 129–150 and 165–178; these read PESLPQNNNPDWHPTNLTLSDE and PSVSPSMPENQSAT. The stretch at 215–244 forms a coiled coil; sequence ENKESKEAEQDLELTSEEEQERLKGCENKQ. Positions 224–234 are enriched in acidic residues; that stretch reads QDLELTSEEEQ. Residues 453-467 are compositionally biased toward polar residues; sequence NMNQNSDSGSTNNYK. Residues 490–546 are a coiled coil; that stretch reads YLHEELQQDMQKFKNEVNTLEEEFLALKKENVQLHKEVEEEMEKHRSNSTELSGTLT. Basic and acidic residues predominate over residues 528–537; that stretch reads EEEMEKHRSN. Residues 543 to 552 show a composition bias toward low complexity; that stretch reads GTLTDGTTVG. Over residues 563-583 the composition is skewed to basic and acidic residues; sequence PRKENEEHDRPADKTANEKNK. A coiled-coil region spans residues 648–713; it reads LLKLKNNHCD…ALKQENGRKE (66 aa).

Belongs to the CCDC144 family.

The chain is Putative coiled-coil domain-containing protein 144B from Homo sapiens (Human).